We begin with the raw amino-acid sequence, 261 residues long: Type II restriction enzyme Sau96I (261 aa).

As to quaternary structure, monomer.

It catalyses the reaction Endonucleolytic cleavage of DNA to give specific double-stranded fragments with terminal 5'-phosphates.. A P subtype restriction enzyme that recognizes the double-stranded sequence 5'-GGNCC-3' and cleaves after G-1. This Staphylococcus aureus protein is Type II restriction enzyme Sau96I.